A 540-amino-acid chain; its full sequence is Cytochrome P450 monooxygenase CYP3 (540 aa).

Asn2 carries N-linked (GlcNAc...) asparagine glycosylation. Residues 26 to 46 (IFGLSSSTLVVLVAMIAVSTL) traverse the membrane as a helical segment. Residues Asn100, Asn210, and Asn400 are each glycosylated (N-linked (GlcNAc...) asparagine). Cys471 contacts heme.

It belongs to the cytochrome P450 family. Requires heme as cofactor.

The protein resides in the membrane. It participates in secondary metabolite biosynthesis. Its function is as follows. Cytochrome P450 monooxygenase; part of the gene cluster that mediates the biosynthesis of itaconic acid and 2-hydroxyparaconate. Cis-aconitate is secreted by the mitochondrial tricarboxylate transporter MTT1. In the cytosol cis-aconitate is converted into trans-aconitate via isomerization by the aconitate-delta-isomerase ADI1. Decarboxylation of trans-aconitate by the trans-aconitate decarboxylase TAD1 then leads then to the production of itaconic acid. The cytochrome P450 monooxygenase CYP3 further converts itaconate to 2-hydroxyparaconate via oxidation of the double bond, leading to a transient epoxide, which can subsequently be lactonized to produce 2-hydroxyparaconate. Secretion of itaconate and possibly 2-hydroxyparaconate into the medium is mediated by the major facilitator ITP1. The glyoxalase domain-containing protein RDO1 is not involved in the biosynthesis of itaconate and 2-hydroxyparaconate, however, it might play a role in the further conversion of 2-hydroxyparaconate to itatartarate. The polypeptide is Cytochrome P450 monooxygenase CYP3 (Mycosarcoma maydis (Corn smut fungus)).